We begin with the raw amino-acid sequence, 449 residues long: 3-phosphoshikimate 1-carboxyvinyltransferase (449 aa).

The interval 1-30 is disordered; that stretch reads MSHDSSPQPLTAAPGAPLRGRLRPPGDKSI. 3-phosphoshikimate-binding residues include lysine 28, serine 29, and arginine 33. Lysine 28 is a phosphoenolpyruvate binding site. 2 residues coordinate phosphoenolpyruvate: glycine 101 and arginine 129. 4 residues coordinate 3-phosphoshikimate: serine 175, glutamine 177, aspartate 330, and lysine 357. Glutamine 177 serves as a coordination point for phosphoenolpyruvate. Aspartate 330 serves as the catalytic Proton acceptor. 2 residues coordinate phosphoenolpyruvate: arginine 361 and arginine 405.

It belongs to the EPSP synthase family. In terms of assembly, monomer.

It localises to the cytoplasm. It carries out the reaction 3-phosphoshikimate + phosphoenolpyruvate = 5-O-(1-carboxyvinyl)-3-phosphoshikimate + phosphate. It functions in the pathway metabolic intermediate biosynthesis; chorismate biosynthesis; chorismate from D-erythrose 4-phosphate and phosphoenolpyruvate: step 6/7. Its function is as follows. Catalyzes the transfer of the enolpyruvyl moiety of phosphoenolpyruvate (PEP) to the 5-hydroxyl of shikimate-3-phosphate (S3P) to produce enolpyruvyl shikimate-3-phosphate and inorganic phosphate. The protein is 3-phosphoshikimate 1-carboxyvinyltransferase of Methylobacterium radiotolerans (strain ATCC 27329 / DSM 1819 / JCM 2831 / NBRC 15690 / NCIMB 10815 / 0-1).